Consider the following 568-residue polypeptide: Type 2 DNA topoisomerase 6 subunit B (568 aa).

Residues N46, D78, 99–100 (TK), 109–116 (GQQGIGIS), and K473 contribute to the ATP site.

This sequence belongs to the TOP6B family. In terms of assembly, homodimer. Heterotetramer of two Top6A and two Top6B chains.

It carries out the reaction ATP-dependent breakage, passage and rejoining of double-stranded DNA.. Relaxes both positive and negative superturns and exhibits a strong decatenase activity. This is Type 2 DNA topoisomerase 6 subunit B from Pyrococcus furiosus (strain ATCC 43587 / DSM 3638 / JCM 8422 / Vc1).